Here is a 315-residue protein sequence, read N- to C-terminus: Methionyl-tRNA formyltransferase (315 aa).

113 to 116 contributes to the (6S)-5,6,7,8-tetrahydrofolate binding site; sequence SILP.

This sequence belongs to the Fmt family.

It catalyses the reaction L-methionyl-tRNA(fMet) + (6R)-10-formyltetrahydrofolate = N-formyl-L-methionyl-tRNA(fMet) + (6S)-5,6,7,8-tetrahydrofolate + H(+). In terms of biological role, attaches a formyl group to the free amino group of methionyl-tRNA(fMet). The formyl group appears to play a dual role in the initiator identity of N-formylmethionyl-tRNA by promoting its recognition by IF2 and preventing the misappropriation of this tRNA by the elongation apparatus. The chain is Methionyl-tRNA formyltransferase from Vibrio cholerae serotype O1 (strain ATCC 39541 / Classical Ogawa 395 / O395).